The primary structure comprises 342 residues: Methionine import ATP-binding protein MetN (342 aa).

The 240-residue stretch at 2–241 (ITLEQVTKIY…PQQPITKRFV (240 aa)) folds into the ABC transporter domain. 38-45 (GYSGAGKS) provides a ligand contact to ATP.

This sequence belongs to the ABC transporter superfamily. Methionine importer (TC 3.A.1.24) family. In terms of assembly, the complex is composed of two ATP-binding proteins (MetN), two transmembrane proteins (MetI) and a solute-binding protein (MetQ).

It localises to the cell membrane. It catalyses the reaction L-methionine(out) + ATP + H2O = L-methionine(in) + ADP + phosphate + H(+). The enzyme catalyses D-methionine(out) + ATP + H2O = D-methionine(in) + ADP + phosphate + H(+). Functionally, part of the ABC transporter complex MetNIQ involved in methionine import. Responsible for energy coupling to the transport system. The polypeptide is Methionine import ATP-binding protein MetN (Geobacillus kaustophilus (strain HTA426)).